The chain runs to 266 residues: Type III pantothenate kinase (266 aa).

6-13 (DAGNTNIV) contacts ATP. Substrate contacts are provided by residues Y100 and 107–110 (GADR). D109 serves as the catalytic Proton acceptor. D129 serves as a coordination point for K(+). T132 provides a ligand contact to ATP. Position 184 (T184) interacts with substrate.

The protein belongs to the type III pantothenate kinase family. As to quaternary structure, homodimer. NH4(+) serves as cofactor. Requires K(+) as cofactor.

The protein resides in the cytoplasm. The catalysed reaction is (R)-pantothenate + ATP = (R)-4'-phosphopantothenate + ADP + H(+). It functions in the pathway cofactor biosynthesis; coenzyme A biosynthesis; CoA from (R)-pantothenate: step 1/5. Catalyzes the phosphorylation of pantothenate (Pan), the first step in CoA biosynthesis. This Clostridium beijerinckii (strain ATCC 51743 / NCIMB 8052) (Clostridium acetobutylicum) protein is Type III pantothenate kinase.